The sequence spans 642 residues: Frizzled-1 (642 aa).

Positions 1 to 68 (MAEEAAPSES…WLLEAPLLLG (68 aa)) are cleaved as a signal peptide. 2 disordered regions span residues 26 to 45 (PGRREEVGHEDTASHRRPRA) and 76 to 99 (QVSGPGQQAPPPPQPQQSGQQYNG). Residues 69-317 (VRAQAAGQVS…PEELRFSRTW (249 aa)) are Extracellular-facing. The FZ domain occupies 106 to 225 (PDHGYCQPIS…HGAGELCVGQ (120 aa)). 5 disulfides stabilise this stretch: cysteine 111-cysteine 172, cysteine 119-cysteine 165, cysteine 156-cysteine 193, cysteine 182-cysteine 222, and cysteine 186-cysteine 210. Asparagine 125 is a glycosylation site (N-linked (GlcNAc...) asparagine). Residue asparagine 226 is glycosylated (N-linked (GlcNAc...) asparagine). A helical transmembrane segment spans residues 318 to 338 (IGIWSVLCCASTLFTVLTYLV). Residues 339 to 349 (DMRRFSYPERP) lie on the Cytoplasmic side of the membrane. A helical membrane pass occupies residues 350–370 (IIFLSGCYTAVAVAYIAGFLL). Over 371 to 397 (EDRVVCNDKFAEDGARTVAQGTKKEGC) the chain is Extracellular. Residues 398-418 (TILFMMLYFFSMASSIWWVIL) traverse the membrane as a helical segment. The Cytoplasmic segment spans residues 419–440 (SLTWFLAAGMKWGHEAIEANSQ). The helical transmembrane segment at 441-461 (YFHLAAWAVPAIKTITILALG) threads the bilayer. Residues 462 to 484 (QVDGDVLSGVCFVGLNNVDALRG) are Extracellular-facing. The helical transmembrane segment at 485-505 (FVLAPLFVYLFIGTSFLLAGF) threads the bilayer. Over 506 to 531 (VSLFRIRTIMKHDGTKTEKLEKLMVR) the chain is Cytoplasmic. A helical membrane pass occupies residues 532-552 (IGVFSVLYTVPATIVIACYFY). Over 553–593 (EQAFRDQWERSWVAQSCKSYAIPCPHLQGGGGVPPHPPMSP) the chain is Extracellular. Residues 594 to 614 (DFTVFMIKYLMTLIVGITSGF) traverse the membrane as a helical segment. The Cytoplasmic segment spans residues 615–642 (WIWSGKTLNSWRKFYTRLTNSKQGETTV). Positions 620-625 (KTLNSW) match the Lys-Thr-X-X-X-Trp motif, mediates interaction with the PDZ domain of Dvl family members motif. A PDZ-binding motif is present at residues 640-642 (TTV).

Belongs to the G-protein coupled receptor Fz/Smo family. In terms of assembly, interacts with MYOC. Interacts with WNT7B. Post-translationally, ubiquitinated by ZNRF3, leading to its degradation by the proteasome. In terms of tissue distribution, expressed in chondrocytes.

The protein localises to the cell membrane. In terms of biological role, receptor for Wnt proteins. Activated by WNT7B. Activated by WNT3A, WNT3, WNT1 and to a lesser extent WNT2, but apparently not by WNT4, WNT5A, WNT5B, WNT6, WNT7A or WNT7B. Contradictory results showing activation by WNT7B have been described for mouse. Functions in the canonical Wnt/beta-catenin signaling pathway. The canonical Wnt/beta-catenin signaling pathway leads to the activation of disheveled proteins, inhibition of GSK-3 kinase, nuclear accumulation of beta-catenin and activation of Wnt target genes. A second signaling pathway involving PKC and calcium fluxes has been seen for some family members, but it is not yet clear if it represents a distinct pathway or if it can be integrated in the canonical pathway, as PKC seems to be required for Wnt-mediated inactivation of GSK-3 kinase. Both pathways seem to involve interactions with G-proteins. May be involved in transduction and intercellular transmission of polarity information during tissue morphogenesis and/or in differentiated tissues. The chain is Frizzled-1 (Fzd1) from Mus musculus (Mouse).